We begin with the raw amino-acid sequence, 582 residues long: Probable inorganic phosphate transporter 1-9 (582 aa).

The Cytoplasmic segment spans residues 1–23 (MAPRIRVLAALDQARTQYYHFKA). Residues 24-44 (IVIAGMGLFTDSYDLFCISPV) traverse the membrane as a helical segment. The Extracellular portion of the chain corresponds to 45–75 (MKIFGRVYYAPSGSVDGSGSGPGVTPPAVVS). A helical membrane pass occupies residues 76–96 (ATVGVALLGAVAGNVVFGALG). The Cytoplasmic portion of the chain corresponds to 97–103 (DRVGRRR). A helical membrane pass occupies residues 104 to 124 (VYGACLLLMVCSSVGSGLSVC). Over 125-130 (RTRRCA) the chain is Extracellular. Residues 131–151 (LASLCFFRFLLGVGVGGDYPL) traverse the membrane as a helical segment. Residues 152–165 (SATIMSEFANRRTR) lie on the Cytoplasmic side of the membrane. A helical membrane pass occupies residues 166 to 186 (GAFIAAVFSMQGFGILVSSAV). Topologically, residues 187-210 (TMAVAAAFDHYTGYPAPLDTPECA) are extracellular. A helical membrane pass occupies residues 211-231 (DLAWRIILMAGAVPAALTYYW). The Cytoplasmic segment spans residues 232–307 (RMSMPETARY…RRFVRQHGRD (76 aa)). Residues 308–328 (LFACAAAWFLLDIPYYSSTLF) form a helical membrane-spanning segment. The Extracellular segment spans residues 329–354 (QSQIYRPWFPPAAKVNAFQEAFNVAK). A helical membrane pass occupies residues 355-375 (FQAVIAVASTIPGYFAAMLLI). Residues 376–385 (ERAGRRRLQM) are Cytoplasmic-facing. Residues 386-406 (AGFLLMAVFLFALAGPYDGYW) form a helical membrane-spanning segment. The Extracellular segment spans residues 407-415 (RDHAKTAGY). Residues 416 to 436 (IVLYSLTFFSANLGPNTTTFI) traverse the membrane as a helical segment. The Cytoplasmic segment spans residues 437-451 (LPAELFPARFRSTCH). The chain crosses the membrane as a helical span at residues 452-472 (GLSGAAGKLGALVGSIGFLWA). Topologically, residues 473 to 485 (SQQKDGAAAGHLP) are extracellular. A helical membrane pass occupies residues 486–506 (GIGMMYALFVLGGICLLGLAL). Residues 507-582 (TYAFTPETMT…SPILPHRMSL (76 aa)) are Cytoplasmic-facing. The disordered stretch occupies residues 519 to 541 (LEENESSVQAQSQVGDGGSDAGN).

This sequence belongs to the major facilitator superfamily. Phosphate:H(+) symporter (TC 2.A.1.9) family. Expressed at low levels in roots.

It is found in the membrane. High-affinity transporter for external inorganic phosphate. The polypeptide is Probable inorganic phosphate transporter 1-9 (PHT1-9) (Oryza sativa subsp. japonica (Rice)).